Reading from the N-terminus, the 402-residue chain is Nicotinate phosphoribosyltransferase (402 aa).

His-226 carries the phosphohistidine; by autocatalysis modification.

It belongs to the NAPRTase family. Transiently phosphorylated on a His residue during the reaction cycle. Phosphorylation strongly increases the affinity for substrates and increases the rate of nicotinate D-ribonucleotide production. Dephosphorylation regenerates the low-affinity form of the enzyme, leading to product release.

It catalyses the reaction nicotinate + 5-phospho-alpha-D-ribose 1-diphosphate + ATP + H2O = nicotinate beta-D-ribonucleotide + ADP + phosphate + diphosphate. The protein operates within cofactor biosynthesis; NAD(+) biosynthesis; nicotinate D-ribonucleotide from nicotinate: step 1/1. Functionally, catalyzes the synthesis of beta-nicotinate D-ribonucleotide from nicotinate and 5-phospho-D-ribose 1-phosphate at the expense of ATP. The protein is Nicotinate phosphoribosyltransferase of Chromobacterium violaceum (strain ATCC 12472 / DSM 30191 / JCM 1249 / CCUG 213 / NBRC 12614 / NCIMB 9131 / NCTC 9757 / MK).